The primary structure comprises 324 residues: Thiamine thiazole synthase (324 aa).

Residues Cys86, Glu107–Ala108, Gly115, and Val180 each bind substrate. Cys213 is modified (2,3-didehydroalanine (Cys)). Substrate contacts are provided by residues Asp215, His230, Met282, and Arg292–Gly294.

The protein belongs to the THI4 family. Homooctamer. Fe cation is required as a cofactor. During the catalytic reaction, a sulfide is transferred from Cys-213 to a reaction intermediate, generating a dehydroalanine residue.

Its subcellular location is the cytoplasm. It localises to the nucleus. The catalysed reaction is [ADP-thiazole synthase]-L-cysteine + glycine + NAD(+) = [ADP-thiazole synthase]-dehydroalanine + ADP-5-ethyl-4-methylthiazole-2-carboxylate + nicotinamide + 3 H2O + 2 H(+). Its function is as follows. Involved in biosynthesis of the thiamine precursor thiazole. Catalyzes the conversion of NAD and glycine to adenosine diphosphate 5-(2-hydroxyethyl)-4-methylthiazole-2-carboxylic acid (ADT), an adenylated thiazole intermediate. The reaction includes an iron-dependent sulfide transfer from a conserved cysteine residue of the protein to a thiazole intermediate. The enzyme can only undergo a single turnover, which suggests it is a suicide enzyme. May have additional roles in adaptation to various stress conditions and in DNA damage tolerance. The protein is Thiamine thiazole synthase (sti35) of Fusarium solani subsp. phaseoli (Nectria haematococca).